We begin with the raw amino-acid sequence, 300 residues long: Geranylgeranyl pyrophosphate synthase (300 aa).

Residue Met-1 is modified to N-acetylmethionine. The isopentenyl diphosphate site is built by Lys-25, Arg-28, and His-57. Mg(2+)-binding residues include Asp-64 and Asp-68. Arg-73 provides a ligand contact to dimethylallyl diphosphate. Arg-74 is a binding site for isopentenyl diphosphate. Dimethylallyl diphosphate-binding residues include Lys-151, Thr-152, Gln-185, Lys-202, and Lys-212.

Belongs to the FPP/GGPP synthase family. In terms of assembly, homohexamer; trimer of homodimers. It depends on Mg(2+) as a cofactor.

Its subcellular location is the cytoplasm. It localises to the perinuclear region. The protein resides in the myofibril. The protein localises to the sarcomere. It is found in the z line. The catalysed reaction is isopentenyl diphosphate + dimethylallyl diphosphate = (2E)-geranyl diphosphate + diphosphate. The enzyme catalyses isopentenyl diphosphate + (2E)-geranyl diphosphate = (2E,6E)-farnesyl diphosphate + diphosphate. It catalyses the reaction isopentenyl diphosphate + (2E,6E)-farnesyl diphosphate = (2E,6E,10E)-geranylgeranyl diphosphate + diphosphate. Its pathway is isoprenoid biosynthesis; farnesyl diphosphate biosynthesis; farnesyl diphosphate from geranyl diphosphate and isopentenyl diphosphate: step 1/1. The protein operates within isoprenoid biosynthesis; geranyl diphosphate biosynthesis; geranyl diphosphate from dimethylallyl diphosphate and isopentenyl diphosphate: step 1/1. It participates in isoprenoid biosynthesis; geranylgeranyl diphosphate biosynthesis; geranylgeranyl diphosphate from farnesyl diphosphate and isopentenyl diphosphate: step 1/1. In terms of biological role, catalyzes the trans-addition of the three molecules of IPP onto DMAPP to form geranylgeranyl pyrophosphate, an important precursor of carotenoids and geranylated proteins. In Rattus norvegicus (Rat), this protein is Geranylgeranyl pyrophosphate synthase (Ggps1).